Reading from the N-terminus, the 365-residue chain is Putative tRNA 2'-phosphotransferase (365 aa).

Disordered regions lie at residues 1–35 (MYKN…IRPR) and 231–254 (LLDA…PESI). Positions 17-27 (SGTPATKSSSK) are enriched in low complexity.

The protein belongs to the KptA/TPT1 family.

The enzyme catalyses 2'-phospho-[ligated tRNA] + NAD(+) = mature tRNA + ADP-alpha-D-ribose 1'',2''-cyclic phosphate + nicotinamide. Its function is as follows. Catalyzes the last step of tRNA splicing, the transfer of the splice junction 2'-phosphate from ligated tRNA to NAD to produce ADP-ribose 1''-2'' cyclic phosphate. The protein is Putative tRNA 2'-phosphotransferase of Schizosaccharomyces pombe (strain 972 / ATCC 24843) (Fission yeast).